The chain runs to 414 residues: Adenylosuccinate synthetase (414 aa).

Residues 12–18 and 40–42 contribute to the GTP site; these read GDEGKGK and GHT. The active-site Proton acceptor is the D13. Mg(2+) contacts are provided by D13 and G40. IMP-binding positions include 13–16, 38–41, T124, R138, Q216, T231, and R297; these read DEGK and NAGH. Catalysis depends on H41, which acts as the Proton donor. 293-299 serves as a coordination point for substrate; sequence STTGRPR. Residues R299, 325–327, and 403–405 each bind GTP; these read KLD and STG.

The protein belongs to the adenylosuccinate synthetase family. Homodimer. It depends on Mg(2+) as a cofactor.

It is found in the cytoplasm. It carries out the reaction IMP + L-aspartate + GTP = N(6)-(1,2-dicarboxyethyl)-AMP + GDP + phosphate + 2 H(+). The protein operates within purine metabolism; AMP biosynthesis via de novo pathway; AMP from IMP: step 1/2. In terms of biological role, plays an important role in the de novo pathway of purine nucleotide biosynthesis. Catalyzes the first committed step in the biosynthesis of AMP from IMP. In Hydrogenobaculum sp. (strain Y04AAS1), this protein is Adenylosuccinate synthetase.